The sequence spans 200 residues: Large ribosomal subunit protein uL4 (200 aa).

The interval 42–65 (TRAQKTRSEVSGGGAKPWRQKGTG) is disordered.

The protein belongs to the universal ribosomal protein uL4 family. In terms of assembly, part of the 50S ribosomal subunit.

Its function is as follows. One of the primary rRNA binding proteins, this protein initially binds near the 5'-end of the 23S rRNA. It is important during the early stages of 50S assembly. It makes multiple contacts with different domains of the 23S rRNA in the assembled 50S subunit and ribosome. In terms of biological role, forms part of the polypeptide exit tunnel. This chain is Large ribosomal subunit protein uL4, found in Vibrio parahaemolyticus serotype O3:K6 (strain RIMD 2210633).